The sequence spans 315 residues: Lipoyl synthase (315 aa).

C62, C67, C73, C88, C92, C95, and S302 together coordinate [4Fe-4S] cluster. One can recognise a Radical SAM core domain in the interval 73 to 291; the sequence is CFGHGTATFM…GELAKKLGFS (219 aa).

Belongs to the radical SAM superfamily. Lipoyl synthase family. [4Fe-4S] cluster serves as cofactor.

Its subcellular location is the cytoplasm. The catalysed reaction is [[Fe-S] cluster scaffold protein carrying a second [4Fe-4S](2+) cluster] + N(6)-octanoyl-L-lysyl-[protein] + 2 oxidized [2Fe-2S]-[ferredoxin] + 2 S-adenosyl-L-methionine + 4 H(+) = [[Fe-S] cluster scaffold protein] + N(6)-[(R)-dihydrolipoyl]-L-lysyl-[protein] + 4 Fe(3+) + 2 hydrogen sulfide + 2 5'-deoxyadenosine + 2 L-methionine + 2 reduced [2Fe-2S]-[ferredoxin]. The protein operates within protein modification; protein lipoylation via endogenous pathway; protein N(6)-(lipoyl)lysine from octanoyl-[acyl-carrier-protein]: step 2/2. In terms of biological role, catalyzes the radical-mediated insertion of two sulfur atoms into the C-6 and C-8 positions of the octanoyl moiety bound to the lipoyl domains of lipoate-dependent enzymes, thereby converting the octanoylated domains into lipoylated derivatives. This is Lipoyl synthase from Coxiella burnetii (strain Dugway 5J108-111).